Here is a 348-residue protein sequence, read N- to C-terminus: Ricin B-like lectin R40C1 (348 aa).

The interval 1 to 26 (MFGFGHHGHHGQDQPPQHHGGGGGGA) is disordered. The region spanning 199-345 (TVRIFCKADE…CEGDNQRWKI (147 aa)) is the Ricin B-type lectin domain.

In terms of tissue distribution, expressed in roots and shoots.

Its function is as follows. Lectin which binds carbohydrates in vitro. Interacts through its lectin domain with glycan structures containing specific motifs. The protein is Ricin B-like lectin R40C1 of Oryza sativa subsp. japonica (Rice).